We begin with the raw amino-acid sequence, 487 residues long: MASTADGDVGETLGQMRGLWPGVEDLSLNKLATSLGASEQALRLIFSIFLGYPLALFYRHYLFYKDSYLIHLFHAFSGLSIAYFNFGHQFYHSLLCVVLQFLILRLMGRTITAVFTTLCFQMAYLLAGYYYTATGDYDIKWTMPHCVLTLKLIGLSIDYYDGGKDRNSLSSEQQKYAILGVPSLLEVAGFSYFYGAFLVGPQFSMNHYMKLVKGQLTDVPGKMPNSTIPALKRLSLGLVYLVGYTLLSPHITEDYLLTEDYDTRPFWFRCMYMLIWGKFVLYKYVTCWLVTEGVCILSGLGFNGFEENGTVKWDACANMKVWLFETTPRFTGTIASFNINTNAWVARYIFKRLKFLGNKELSQGLSLLFLALWHGLHSGYLICFQMEFLIVIVEKQATNLIRDSPALSSLASITALQPFYYLVQQTIHWLFMGYSMTAFCLFTWDKWLKVYRSIYFLGHVFFLSLLFTLPYVYKAMVPRKEKLKKRE.

An N-acetylalanine modification is found at Ala2. 6 consecutive transmembrane segments (helical) span residues 44–64, 67–87, 111–131, 178–198, 236–256, and 285–305; these read LIFSIFLGYPLALFYRHYLFY, SYLIHLFHAFSGLSIAYFNFG, ITAVFTTLCFQMAYLLAGYYY, ILGVPSLLEVAGFSYFYGAFL, LGLVYLVGYTLLSPHITEDYL, and VTCWLVTEGVCILSGLGFNGF. Asn308 carries an N-linked (GlcNAc...) asparagine glycan. Active-site residues include Asn338 and His374. Helical transmembrane passes span 364-384, 422-442, and 453-473; these read GLSLLFLALWHGLHSGYLICF, LVQQTIHWLFMGYSMTAFCLF, and SIYFLGHVFFLSLLFTLPYVY. The short motif at 484–487 is the Di-lysine motif element; the sequence is KKRE.

It belongs to the membrane-bound acyltransferase family.

The protein resides in the endoplasmic reticulum membrane. It catalyses the reaction a 1-acyl-sn-glycero-3-phosphocholine + an acyl-CoA = a 1,2-diacyl-sn-glycero-3-phosphocholine + CoA. The catalysed reaction is a 1-acyl-sn-glycero-3-phosphoethanolamine + an acyl-CoA = a 1,2-diacyl-sn-glycero-3-phosphoethanolamine + CoA. The enzyme catalyses a 1-acyl-sn-glycero-3-phospho-L-serine + an acyl-CoA = a 1,2-diacyl-sn-glycero-3-phospho-L-serine + CoA. It carries out the reaction (9Z,12Z)-octadecadienoyl-CoA + a 1-acyl-sn-glycero-3-phosphocholine = 1-acyl-2-(9Z,12Z)-octadecadienoyl-sn-glycero-3-phosphocholine + CoA. It catalyses the reaction (5Z,8Z,11Z,14Z)-eicosatetraenoyl-CoA + a 1-acyl-sn-glycero-3-phosphocholine = 1-acyl-2-(5Z,8Z,11Z,14Z-eicosatetraenoyl)-sn-glycero-3-phosphocholine + CoA. The catalysed reaction is dodecanoyl-CoA + 1-hexadecanoyl-sn-glycero-3-phosphocholine = 1-hexadecanoyl-2-dodecanoyl-sn-glycero-3-phosphocholine + CoA. The enzyme catalyses octadecanoyl-CoA + 1-hexadecanoyl-sn-glycero-3-phosphocholine = 1-hexadecanoyl-2-octadecanoyl-sn-glycero-3-phosphocholine + CoA. It carries out the reaction 1-dodecanoyl-sn-glycero-3-phosphocholine + hexadecanoyl-CoA = 1-dodecanoyl-2-hexadecanoyl-sn-glycero-3-phosphocholine + CoA. It catalyses the reaction 1-tetradecanoyl-sn-glycero-3-phosphocholine + hexadecanoyl-CoA = 1-tetradecanoyl-2-hexadecanoyl-sn-glycero-3-phosphocholine + CoA. The catalysed reaction is 1-hexadecanoyl-sn-glycero-3-phosphocholine + hexadecanoyl-CoA = 1,2-dihexadecanoyl-sn-glycero-3-phosphocholine + CoA. The enzyme catalyses 1-octadecanoyl-sn-glycero-3-phosphocholine + hexadecanoyl-CoA = 1-octadecanoyl-2-hexadecanoyl-sn-glycero-3-phosphocholine + CoA. It carries out the reaction 1-(9Z-octadecenoyl)-sn-glycero-3-phosphocholine + hexadecanoyl-CoA = 1-(9Z-octadecenoyl)-2-hexadecanoyl-sn-glycero-3-phosphocholine + CoA. It catalyses the reaction (9Z)-hexadecenoyl-CoA + 1-hexadecanoyl-sn-glycero-3-phosphocholine = 1-hexadecanoyl-2-(9Z-hexadecenoyl)-sn-glycero-3-phosphocholine + CoA. The catalysed reaction is 1-hexadecanoyl-sn-glycero-3-phosphocholine + (9Z)-octadecenoyl-CoA = 1-hexadecanoyl-2-(9Z-octadecenoyl)-sn-glycero-3-phosphocholine + CoA. The enzyme catalyses (9Z,12Z)-octadecadienoyl-CoA + 1-hexadecanoyl-sn-glycero-3-phosphocholine = 1-hexadecanoyl-2-(9Z,12Z-octadecadienoyl)-sn-glycero-3-phosphocholine + CoA. It carries out the reaction 1-dodecanoyl-sn-glycero-3-phosphocholine + (5Z,8Z,11Z,14Z)-eicosatetraenoyl-CoA = 1-dodecanoyl-2-(5Z,8Z,11Z,14Z)-eicosatetraenoyl-sn-glycero-3-phosphocholine + CoA. It catalyses the reaction (5Z,8Z,11Z,14Z)-eicosatetraenoyl-CoA + 1-hexadecanoyl-sn-glycero-3-phosphocholine = 1-hexadecanoyl-2-(5Z,8Z,11Z,14Z-eicosatetraenoyl)-sn-glycero-3-phosphocholine + CoA. The catalysed reaction is 1-octadecanoyl-sn-glycero-3-phosphocholine + (5Z,8Z,11Z,14Z)-eicosatetraenoyl-CoA = 1-octadecanoyl-2-(5Z,8Z,11Z,14Z-eicosatetraenoyl)-sn-glycero-3-phosphocholine + CoA. The enzyme catalyses 1-eicosanoyl-sn-glycero-3-phosphocholine + (5Z,8Z,11Z,14Z)-eicosatetraenoyl-CoA = 1-eicosanoyl-2-(5Z,8Z,11Z,14Z)-eicosatetraenoyl-sn-glycero-3-phosphocholine + CoA. It carries out the reaction 1-(9Z-octadecenoyl)-sn-glycero-3-phosphocholine + (9Z)-octadecenoyl-CoA = 1,2-di-(9Z-octadecenoyl)-sn-glycero-3-phosphocholine + CoA. It catalyses the reaction 1-(9Z-octadecenoyl)-sn-glycero-3-phosphocholine + (9Z,12Z)-octadecadienoyl-CoA = 1-(9Z)-octadecenoyl-2-(9Z,12Z)-octadecadienoyl-sn-glycero-3-phosphocholine + CoA. The catalysed reaction is 1-(9Z-octadecenoyl)-sn-glycero-3-phosphocholine + (5Z,8Z,11Z,14Z)-eicosatetraenoyl-CoA = 1-(9Z)-octadecenoyl-2-(5Z,8Z,11Z,14Z)-icosatetraenoyl-sn-glycero-3-phosphocholine + CoA. The enzyme catalyses a 1-acyl-sn-glycero-3-phosphoethanolamine + (9Z,12Z)-octadecadienoyl-CoA = 1-acyl-2-(9Z,12Z)-octadecadienoyl-sn-glycero-3-phosphoethanolamine + CoA. It carries out the reaction 1-(9Z-octadecenoyl)-sn-glycero-3-phosphoethanolamine + (9Z,12Z)-octadecadienoyl-CoA = 1-(9Z)-octadecenoyl-2-(9Z,12Z)-octadecadienoyl-sn-glycero-3-phosphoethanolamine + CoA. It catalyses the reaction 1-(10Z-heptadecenoyl)-sn-glycero-3-phosphoethanolamine + (9Z,12Z)-octadecadienoyl-CoA = 1-(10Z-heptadecenoyl)-2-(9Z,12Z-octadecadienoyl)-sn-glycero-3-phosphoethanolamine + CoA. The catalysed reaction is a 1-acyl-sn-glycero-3-phosphoethanolamine + (5Z,8Z,11Z,14Z)-eicosatetraenoyl-CoA = 1-acyl-2-(5Z,8Z,11Z,14Z)-eicosatetraenoyl-sn-glycero-3-phosphoethanolamine + CoA. The enzyme catalyses 1-hexadecanoyl-sn-glycero-3-phosphoethanolamine + (5Z,8Z,11Z,14Z)-eicosatetraenoyl-CoA = 1-hexadecanoyl-2-(5Z,8Z,11Z,14Z-eicosatetraenoyl)-sn-glycero-3-phosphoethanolamine + CoA. It carries out the reaction 1-(9Z-octadecenoyl)-sn-glycero-3-phosphoethanolamine + (5Z,8Z,11Z,14Z)-eicosatetraenoyl-CoA = 1-(9Z)-octadecenoyl-2-(5Z,8Z,11Z,14Z)-eicosatetraenoyl-sn-glycero-3-phosphoethanolamine + CoA. It catalyses the reaction 1-(10Z-heptadecenoyl)-sn-glycero-3-phosphoethanolamine + (5Z,8Z,11Z,14Z)-eicosatetraenoyl-CoA = 1-(10Z-heptadecenoyl)-2-(5Z,8Z,11Z,14Z-eicosatetraenoyl)-sn-glycero-3-phosphoethanolamine + CoA. The catalysed reaction is a 1-O-(1Z-alkenyl)-sn-glycero-3-phosphoethanolamine + (5Z,8Z,11Z,14Z)-eicosatetraenoyl-CoA = 1-O-(1Z)-alkenyl-2-(5Z,8Z,11Z,14Z)-eicosatetraenoyl-sn-glycero-3-phosphoethanolamine + CoA. The enzyme catalyses a 1-acyl-sn-glycero-3-phospho-L-serine + (9Z,12Z)-octadecadienoyl-CoA = 1-acyl-2-(9Z,12Z-octadecadienoyl)-sn-glycero-3-phospho-L-serine + CoA. It carries out the reaction a 1-acyl-sn-glycero-3-phospho-L-serine + (5Z,8Z,11Z,14Z)-eicosatetraenoyl-CoA = 1-acyl-2-(5Z,8Z,11Z,14Z-eicosatetraenoyl)-sn-glycero-3-phospho-L-serine + CoA. It catalyses the reaction 1-hexadecanoyl-sn-glycero-3-phospho-L-serine + (9Z)-octadecenoyl-CoA = 1-hexadecanoyl-2-(9Z-octadecenoyl)-sn-glycero-3-phospho-L-serine + CoA. The catalysed reaction is 1-(9Z-octadecenoyl)-sn-glycero-3-phospho-L-serine + (9Z)-octadecenoyl-CoA = 1,2-di-(9Z)-octadecenoyl-sn-glycero-3-phospho-L-serine + CoA. The enzyme catalyses 1-hexadecanoyl-sn-glycero-3-phospho-L-serine + (9Z,12Z)-octadecadienoyl-CoA = 1-hexadecanoyl-2-(9Z,12Z-octadecadienoyl)-sn-glycero-3-phospho-L-serine + CoA. It carries out the reaction 1-(9Z-octadecenoyl)-sn-glycero-3-phospho-L-serine + (9Z,12Z)-octadecadienoyl-CoA = 1-(9Z-octadecenoyl)-2-(9Z,12Z-octadienoyl)-sn-glycero-3-phospho-L-serine + CoA. It catalyses the reaction 1-hexadecanoyl-sn-glycero-3-phospho-L-serine + (5Z,8Z,11Z,14Z)-eicosatetraenoyl-CoA = 1-hexadecanoyl-2-(5Z,8Z,11Z,14Z-eicosatetraenoyl)-sn-glycero-3-phospho-L-serine + CoA. The catalysed reaction is 1-(9Z-octadecenoyl)-sn-glycero-3-phospho-L-serine + (5Z,8Z,11Z,14Z)-eicosatetraenoyl-CoA = 1-(9Z-octadecenoyl)-2-(5Z,8Z,11Z,14Z-eicosatetraenoyl)-sn-glycero-3-phospho-L-serine + CoA. The protein operates within lipid metabolism; phospholipid metabolism. Lysophospholipid O-acyltransferase (LPLAT) that catalyzes the reacylation step of the phospholipid remodeling process also known as the Lands cycle. Catalyzes transfer of the fatty acyl chain from fatty acyl-CoA to 1-acyl lysophospholipid to form various classes of phospholipids. Converts 1-acyl lysophosphatidylcholine (LPC) into phosphatidylcholine (PC) (LPCAT activity), 1-acyl lysophosphatidylserine (LPS) into phosphatidylserine (PS) (LPSAT activity) and 1-acyl lysophosphatidylethanolamine (LPE) into phosphatidylethanolamine (PE) (LPEAT activity). Favors polyunsaturated fatty acyl-CoAs as acyl donors compared to saturated fatty acyl-CoAs. Has higher activity for LPC acyl acceptors compared to LPEs and LPSs. Can also transfer the fatty acyl chain from fatty acyl-CoA to 1-O-alkyl lysophospholipid or 1-O-alkenyl lysophospholipid with lower efficiency. Acts as a major LPC O-acyltransferase in liver and intestine. As a component of the liver X receptor/NR1H3 or NR1H2 signaling pathway, mainly catalyzes the incorporation of arachidonate into PCs of endoplasmic reticulum (ER) membranes, increasing membrane dynamics and enabling triacylglycerols transfer to nascent very low-density lipoprotein (VLDL) particles. Promotes processing of sterol regulatory protein SREBF1 in hepatocytes, likely by facilitating the translocation of SREBF1-SCAP complex from ER to the Golgi apparatus. Participates in mechanisms by which the liver X receptor/NR1H3 or NR1H2 signaling pathway counteracts lipid-induced ER stress response and inflammation. Down-regulates hepatic inflammation by limiting arachidonic acid availability for synthesis of inflammatory eicosanoids, such as prostaglandins. In enterocytes, acts as a component of a gut-brain feedback loop that coordinates dietary lipid absorption and food intake. Regulates the abundance of PCs containing linoleate and arachidonate in enterocyte membranes, enabling passive diffusion of fatty acids and cholesterol across the membrane for efficient chylomicron assembly. In the intestinal crypt, acts as a component of dietary-responsive phospholipid-cholesterol axis, regulating the biosynthesis of cholesterol and its mitogenic effects on intestinal stem cells. The sequence is that of Lysophospholipid acyltransferase 5 (Lpcat3) from Rattus norvegicus (Rat).